The chain runs to 213 residues: Protein HSH49 (213 aa).

RRM domains lie at 9-88 (NTVY…QVTN) and 108-185 (AKLF…YAFK).

As to quaternary structure, interacts with RDS3.

The protein resides in the nucleus. Functionally, possible SF3b-like factor. This Saccharomyces cerevisiae (strain ATCC 204508 / S288c) (Baker's yeast) protein is Protein HSH49 (HSH49).